Here is a 66-residue protein sequence, read N- to C-terminus: Large ribosomal subunit protein eL24 (66 aa).

Zn(2+) contacts are provided by Cys-6, Cys-9, Cys-32, and Cys-36. The segment at 6–36 adopts a C4-type zinc-finger fold; the sequence is CSFCGKTIEPGTGIMYVRKDGAILYFCSNKC.

The protein belongs to the eukaryotic ribosomal protein eL24 family. As to quaternary structure, part of the 50S ribosomal subunit. Forms a cluster with proteins L3 and L14. Zn(2+) is required as a cofactor.

Its function is as follows. Binds to the 23S rRNA. This is Large ribosomal subunit protein eL24 from Thermoplasma volcanium (strain ATCC 51530 / DSM 4299 / JCM 9571 / NBRC 15438 / GSS1).